Reading from the N-terminus, the 174-residue chain is Cytochrome c-type biogenesis protein CcmE (174 aa).

Residues M1 to R8 are Cytoplasmic-facing. A helical; Signal-anchor for type II membrane protein membrane pass occupies residues L9–A29. The Periplasmic segment spans residues L30 to Q174. Heme is bound by residues H131 and Y135. The disordered stretch occupies residues K149 to Q174. A compositionally biased stretch (basic and acidic residues) spans L156–Q174.

It belongs to the CcmE/CycJ family.

The protein resides in the cell inner membrane. Functionally, heme chaperone required for the biogenesis of c-type cytochromes. Transiently binds heme delivered by CcmC and transfers the heme to apo-cytochromes in a process facilitated by CcmF and CcmH. The chain is Cytochrome c-type biogenesis protein CcmE from Histophilus somni (strain 129Pt) (Haemophilus somnus).